A 245-amino-acid chain; its full sequence is Biosynthetic peptidoglycan transglycosylase (245 aa).

Residues 19 to 39 (IVYAGAVFAAAWLATQLFYFV) traverse the membrane as a helical segment.

It belongs to the glycosyltransferase 51 family.

It is found in the cell inner membrane. It carries out the reaction [GlcNAc-(1-&gt;4)-Mur2Ac(oyl-L-Ala-gamma-D-Glu-L-Lys-D-Ala-D-Ala)](n)-di-trans,octa-cis-undecaprenyl diphosphate + beta-D-GlcNAc-(1-&gt;4)-Mur2Ac(oyl-L-Ala-gamma-D-Glu-L-Lys-D-Ala-D-Ala)-di-trans,octa-cis-undecaprenyl diphosphate = [GlcNAc-(1-&gt;4)-Mur2Ac(oyl-L-Ala-gamma-D-Glu-L-Lys-D-Ala-D-Ala)](n+1)-di-trans,octa-cis-undecaprenyl diphosphate + di-trans,octa-cis-undecaprenyl diphosphate + H(+). The protein operates within cell wall biogenesis; peptidoglycan biosynthesis. In terms of biological role, peptidoglycan polymerase that catalyzes glycan chain elongation from lipid-linked precursors. The chain is Biosynthetic peptidoglycan transglycosylase from Burkholderia multivorans (strain ATCC 17616 / 249).